Here is a 338-residue protein sequence, read N- to C-terminus: Anthranilate phosphoribosyltransferase (338 aa).

Residues Gly81, 84 to 85, Thr89, 91 to 94, 109 to 117, and Ala121 each bind 5-phospho-alpha-D-ribose 1-diphosphate; these read GD, NIST, and KHGNRNLSS. Gly81 serves as a coordination point for anthranilate. Position 93 (Ser93) interacts with Mg(2+). Asn112 contacts anthranilate. Residue Arg167 participates in anthranilate binding. Asp226 and Glu227 together coordinate Mg(2+).

Belongs to the anthranilate phosphoribosyltransferase family. As to quaternary structure, homodimer. It depends on Mg(2+) as a cofactor.

The catalysed reaction is N-(5-phospho-beta-D-ribosyl)anthranilate + diphosphate = 5-phospho-alpha-D-ribose 1-diphosphate + anthranilate. The protein operates within amino-acid biosynthesis; L-tryptophan biosynthesis; L-tryptophan from chorismate: step 2/5. Functionally, catalyzes the transfer of the phosphoribosyl group of 5-phosphorylribose-1-pyrophosphate (PRPP) to anthranilate to yield N-(5'-phosphoribosyl)-anthranilate (PRA). The sequence is that of Anthranilate phosphoribosyltransferase from Cereibacter sphaeroides (strain ATCC 17025 / ATH 2.4.3) (Rhodobacter sphaeroides).